The sequence spans 491 residues: NADH-quinone oxidoreductase subunit N (491 aa).

The next 14 membrane-spanning stretches (helical) occupy residues 6-26 (TLAPVAPIIFLAIAIAAINWI), 37-57 (VAYPLSLLTTLVLTAWFGMNA), 69-89 (LVVIDPMANVLSAFCAAGLFV), 103-123 (MFAGEFYMLALFTLGGQIVMI), 128-148 (FLTLYLGLELLSLSSYALVAL), 163-183 (FVLGALASGFLLYGISMMYGA), 206-226 (LAFGVVFIVAGLSFKLGAAPF), 238-258 (PTAVTLLIAGGPKVAAFALFI), 273-293 (QMMLVVLSIISLAIGNLTAIV), 301-321 (LAYSTISHMGFVLLGLLSGVV), 335-355 (AMFYSVTYLLTTLGTFGIILL), 379-399 (FAFLMLVMMFSLAGIPPTVGF), 413-433 (GMTWLAVVAVLFSLIGAFYYL), and 458-478 (SMLSVNGAAVILLGLFPAALM).

The protein belongs to the complex I subunit 2 family. As to quaternary structure, NDH-1 is composed of 14 different subunits. Subunits NuoA, H, J, K, L, M, N constitute the membrane sector of the complex.

It is found in the cell inner membrane. The catalysed reaction is a quinone + NADH + 5 H(+)(in) = a quinol + NAD(+) + 4 H(+)(out). In terms of biological role, NDH-1 shuttles electrons from NADH, via FMN and iron-sulfur (Fe-S) centers, to quinones in the respiratory chain. The immediate electron acceptor for the enzyme in this species is believed to be ubiquinone. Couples the redox reaction to proton translocation (for every two electrons transferred, four hydrogen ions are translocated across the cytoplasmic membrane), and thus conserves the redox energy in a proton gradient. The chain is NADH-quinone oxidoreductase subunit N from Cupriavidus taiwanensis (strain DSM 17343 / BCRC 17206 / CCUG 44338 / CIP 107171 / LMG 19424 / R1) (Ralstonia taiwanensis (strain LMG 19424)).